The primary structure comprises 192 residues: MEVILLERISKLGQMGETVKVRDGFARNYLLPLGKALRANAANKARFESERATLEARNLERKSEAQKVADVLDGKSFIVVRSAGETGQLYGSVAARDVVEVLAAEGFNIGRNQVHLNTPIKAIGLHKVELQLHAEVEIHVELNVARSAEEAERQAKGEELTSVDAIYGVDEDALRPEDFFDPEADGIDEDEA.

A disordered region spans residues 172 to 192 (DALRPEDFFDPEADGIDEDEA). The segment covering 179–192 (FFDPEADGIDEDEA) has biased composition (acidic residues).

Belongs to the bacterial ribosomal protein bL9 family.

In terms of biological role, binds to the 23S rRNA. The chain is Large ribosomal subunit protein bL9 from Rhizobium etli (strain CIAT 652).